Here is a 51-residue protein sequence, read N- to C-terminus: Large ribosomal subunit protein eL39 (51 aa).

The protein belongs to the eukaryotic ribosomal protein eL39 family.

In Staphylothermus marinus (strain ATCC 43588 / DSM 3639 / JCM 9404 / F1), this protein is Large ribosomal subunit protein eL39.